The primary structure comprises 741 residues: MSKDGPFRFGARGLWTSGQALLFLDPLGVWMGTPMNDTYVAVEALSEAAARKELARLSELLARANAEYHRDDAPSLSDADYDALKQRNAAIEARFPDLKRGDSPSDQVGAAPSDTFSKVTHAVRMLSLANAFSDEDIRDFDTRIRRFLGLAEDAPLAYTAEPKIDGLSLSLRYEHGTLVQAATRGDGAVGENVTANARTIDDIPHRLDGAPEVLEVRGEVYMSHADFAELNARQAETGGKTFANPRNAAAGSLRQLDAEITRARPLKFFAYAWGEISAPLAETQTETLARFREFGFTINPLTVRCETPEDMLAQYRAIEAQRATLGYDIDGVVYKLDDLDLQRRLGFRSTTPRWAIAHKFPAELAWTRLEAIDIQVGRTGALSPVARLAPVTVGGVVVSNATLHNEDYIQGRDNTGAPIRWGTDIRVGDWVQVYRAGDVIPKIRDVDLSRRPEGAAPFDFPTTCPECGSDAPREPGDAVRRCSGGLICPAQAVEKLKHFVSRGALDIDGLGAKQVEQFYRDGWIAEPADIFTLRARFGQGLQQLKNREGWGDKSAENLFRAIDTARTAPFAKVLFGLGIRHIGESASSLLANHYLTMEALLAAVDAAVDETSDAWADLLNIDGVGEVMARALVTTLTQEAERASVNRLLAQIDPAPATPPQVGDSPVAGKTLVFTGTLETMSRAEAKATAEALGAKVAGSVSAKTDLLIAGPGAGSKATKAEALGIEVIDEDAWRVLAGLA.

NAD(+)-binding positions include 78–82 (DADYD), 127–128 (SL), and Glu161. The active-site N6-AMP-lysine intermediate is Lys163. NAD(+) is bound by residues Arg184, Glu219, Lys335, and Lys359. Residues Cys464, Cys467, Cys482, and Cys488 each coordinate Zn(2+). A BRCT domain is found at 662-741 (VGDSPVAGKT…DAWRVLAGLA (80 aa)).

It belongs to the NAD-dependent DNA ligase family. LigA subfamily. The cofactor is Mg(2+). Mn(2+) is required as a cofactor.

It carries out the reaction NAD(+) + (deoxyribonucleotide)n-3'-hydroxyl + 5'-phospho-(deoxyribonucleotide)m = (deoxyribonucleotide)n+m + AMP + beta-nicotinamide D-nucleotide.. In terms of biological role, DNA ligase that catalyzes the formation of phosphodiester linkages between 5'-phosphoryl and 3'-hydroxyl groups in double-stranded DNA using NAD as a coenzyme and as the energy source for the reaction. It is essential for DNA replication and repair of damaged DNA. This is DNA ligase from Dinoroseobacter shibae (strain DSM 16493 / NCIMB 14021 / DFL 12).